We begin with the raw amino-acid sequence, 508 residues long: Polyamine oxidase FMS1 (508 aa).

The protein belongs to the flavin monoamine oxidase family. The cofactor is FAD.

It catalyses the reaction spermine + O2 + H2O = 3-aminopropanal + spermidine + H2O2. It carries out the reaction spermidine + O2 + H2O = 3-aminopropanal + putrescine + H2O2. The enzyme catalyses N(1)-acetylspermine + O2 + H2O = 3-acetamidopropanal + spermidine + H2O2. The catalysed reaction is N(1)-acetylspermidine + O2 + H2O = 3-acetamidopropanal + putrescine + H2O2. It catalyses the reaction N(8)-acetylspermidine + O2 + H2O = 4-acetamidobutanal + propane-1,3-diamine + H2O2. Involved in the production of beta-alanine, a precursor of pantothenic acid. Multicopy suppressor of fenpropimorph resistance. This chain is Polyamine oxidase FMS1 (FMS1), found in Saccharomyces cerevisiae (strain ATCC 204508 / S288c) (Baker's yeast).